A 122-amino-acid chain; its full sequence is Large ribosomal subunit protein bL12 (122 aa).

It belongs to the bacterial ribosomal protein bL12 family. Homodimer. Part of the ribosomal stalk of the 50S ribosomal subunit. Forms a multimeric L10(L12)X complex, where L10 forms an elongated spine to which 2 to 4 L12 dimers bind in a sequential fashion. Binds GTP-bound translation factors.

Its function is as follows. Forms part of the ribosomal stalk which helps the ribosome interact with GTP-bound translation factors. Is thus essential for accurate translation. The polypeptide is Large ribosomal subunit protein bL12 (Buchnera aphidicola subsp. Baizongia pistaciae (strain Bp)).